The following is a 242-amino-acid chain: Ribosomal RNA large subunit methyltransferase E (242 aa).

S-adenosyl-L-methionine is bound by residues Gly-88, Trp-90, Asp-111, Asp-127, and Asp-151. The Proton acceptor role is filled by Lys-191.

The protein belongs to the class I-like SAM-binding methyltransferase superfamily. RNA methyltransferase RlmE family.

It is found in the cytoplasm. It carries out the reaction uridine(2552) in 23S rRNA + S-adenosyl-L-methionine = 2'-O-methyluridine(2552) in 23S rRNA + S-adenosyl-L-homocysteine + H(+). In terms of biological role, specifically methylates the uridine in position 2552 of 23S rRNA at the 2'-O position of the ribose in the fully assembled 50S ribosomal subunit. The protein is Ribosomal RNA large subunit methyltransferase E of Bartonella tribocorum (strain CIP 105476 / IBS 506).